Reading from the N-terminus, the 164-residue chain is E3 ubiquitin ligase complex SCF subunit sconC (164 aa).

Residues Ile106–Glu164 are interaction with the F-box domain of F-box proteins.

The protein belongs to the SKP1 family. Component of the SCF (SKP1-CUL1-F-box protein) E3 ubiquitin ligase complexes.

It participates in protein modification; protein ubiquitination. Its function is as follows. Essential component of the SCF (SKP1-CUL1-F-box protein) E3 ubiquitin ligase complexes, which mediate the ubiquitination and subsequent proteasomal degradation of target proteins. Controls sulfur metabolite repression, probably by mediating the inactivation or degradation of the metR transcription factor. The sequence is that of E3 ubiquitin ligase complex SCF subunit sconC (sconC) from Arthroderma benhamiae (strain ATCC MYA-4681 / CBS 112371) (Trichophyton mentagrophytes).